Reading from the N-terminus, the 181-residue chain is Bifunctional protein PyrR (181 aa).

The short motif at 101-113 (VIVVDDVLYTGRT) is the PRPP-binding element.

The protein belongs to the purine/pyrimidine phosphoribosyltransferase family. PyrR subfamily. As to quaternary structure, homodimer and homohexamer; in equilibrium.

It catalyses the reaction UMP + diphosphate = 5-phospho-alpha-D-ribose 1-diphosphate + uracil. Functionally, regulates transcriptional attenuation of the pyrimidine nucleotide (pyr) operon by binding in a uridine-dependent manner to specific sites on pyr mRNA. This disrupts an antiterminator hairpin in the RNA and favors formation of a downstream transcription terminator, leading to a reduced expression of downstream genes. Its function is as follows. Also displays a weak uracil phosphoribosyltransferase activity which is not physiologically significant. The chain is Bifunctional protein PyrR from Bacillus velezensis (strain DSM 23117 / BGSC 10A6 / LMG 26770 / FZB42) (Bacillus amyloliquefaciens subsp. plantarum).